A 576-amino-acid chain; its full sequence is Arginine--tRNA ligase (576 aa).

The 'HIGH' region signature appears at 126–136; sequence ANPTGPMHIGH.

Belongs to the class-I aminoacyl-tRNA synthetase family. Monomer.

It is found in the cytoplasm. The catalysed reaction is tRNA(Arg) + L-arginine + ATP = L-arginyl-tRNA(Arg) + AMP + diphosphate. This chain is Arginine--tRNA ligase, found in Rickettsia felis (strain ATCC VR-1525 / URRWXCal2) (Rickettsia azadi).